Here is a 264-residue protein sequence, read N- to C-terminus: MFDIGVNLTSSQFESDRDAVISRARREGVTGMLLTGTGIEESRHALRLAEGAPGYCWSTAGIHPHEASTWTDAAALSIRQLAVHPQVVAIGECGLDFNRNFSTPSEQERAFSAQLAIAADLGMPVFMHCREAHSRFMMLLRPWLEKLPAAVLHCFTGTRDELDECLQAGLSIGITGWVCDERRGLALRALLEYIPDDRLLLETDAPYLLPRDLHPKPTSRRNEPCFLPHIVRQVAAWRKQDAVALGRVVDDNARRIFRLGQKGE.

3 residues coordinate a divalent metal cation: Glu-92, His-128, and His-153.

The protein belongs to the metallo-dependent hydrolases superfamily. TatD-type hydrolase family. TatD subfamily. In terms of assembly, monomer. The cofactor is Mg(2+).

The protein resides in the cytoplasm. Functionally, 3'-5' exonuclease that prefers single-stranded DNA and RNA. May play a role in the H(2)O(2)-induced DNA damage repair. The chain is 3'-5' ssDNA/RNA exonuclease TatD from Musicola paradisiaca (strain Ech703) (Dickeya paradisiaca).